The primary structure comprises 439 residues: Methionine aminopeptidase 2-1 (439 aa).

Residues 1-87 are disordered; the sequence is MSGGESRSPD…DKLFPSGNFP (87 aa). Positions 22–32 are enriched in acidic residues; the sequence is GGDDEESDGDG. Positions 47–61 are enriched in basic residues; sequence KKRKKRNKKKSKKKS. H190 contacts substrate. Residues D211, D222, and H291 each contribute to the a divalent metal cation site. H299 provides a ligand contact to substrate. The a divalent metal cation site is built by E324 and E420.

This sequence belongs to the peptidase M24A family. Methionine aminopeptidase eukaryotic type 2 subfamily. Co(2+) is required as a cofactor. The cofactor is Zn(2+). It depends on Mn(2+) as a cofactor. Requires Fe(2+) as cofactor.

The protein resides in the cytoplasm. It catalyses the reaction Release of N-terminal amino acids, preferentially methionine, from peptides and arylamides.. Functionally, cotranslationally removes the N-terminal methionine from nascent proteins. The N-terminal methionine is often cleaved when the second residue in the primary sequence is small and uncharged (Met-Ala-, Cys, Gly, Pro, Ser, Thr, or Val). In Chaetomium globosum (strain ATCC 6205 / CBS 148.51 / DSM 1962 / NBRC 6347 / NRRL 1970) (Soil fungus), this protein is Methionine aminopeptidase 2-1.